Reading from the N-terminus, the 299-residue chain is Probable lipid kinase YegS (299 aa).

A DAGKc domain is found at 2 to 133; that stretch reads ANFPASLLIL…IDMARVNDKT (132 aa). Residues T40, 66–72, and T95 each bind ATP; that span reads GDGTINE. Mg(2+) is bound by residues L215, D218, and L220. Residue E271 is the Proton acceptor of the active site.

The protein belongs to the diacylglycerol/lipid kinase family. YegS lipid kinase subfamily. Mg(2+) is required as a cofactor. Requires Ca(2+) as cofactor.

The protein resides in the cytoplasm. Functionally, probably phosphorylates lipids; the in vivo substrate is unknown. This chain is Probable lipid kinase YegS, found in Salmonella gallinarum (strain 287/91 / NCTC 13346).